Here is a 169-residue protein sequence, read N- to C-terminus: Probable calcium-binding protein CML13 (169 aa).

A disordered region spans residues 1–26 (MSTVKGQTRRERPRGARPHGLTKQKR). The span at 15–24 (GARPHGLTKQ) shows a compositional bias: basic residues. 4 consecutive EF-hand domains span residues 24 to 59 (QKRQ…LGFE), 60 to 95 (MTEE…KIGE), 97 to 132 (DSKE…LGEN), and 133 to 168 (FTYQ…TGYG). Asp37, Asp39, Ser41, Thr43, Glu48, Asp73, Asp75, Ser77, Ser79, Glu84, Asp110, Asp112, Asn114, Lys116, Asp121, Asp146, Asn148, Asp150, Glu152, and Glu157 together coordinate Ca(2+).

Its function is as follows. Potential calcium sensor. This is Probable calcium-binding protein CML13 (CML13) from Oryza sativa subsp. japonica (Rice).